Consider the following 718-residue polypeptide: Sodium/myo-inositol cotransporter (718 aa).

Residues 1 to 9 lie on the Extracellular side of the membrane; sequence MRAVLEAAD. Residues 10 to 29 traverse the membrane as a helical segment; that stretch reads IAVVALYFILVMCIGFFAMW. Topologically, residues 30–38 are cytoplasmic; the sequence is KSNRSTVSG. The helical transmembrane segment at 39 to 57 threads the bilayer; it reads YFLAGRSMTWVAIGASLFV. The Extracellular segment spans residues 58–86; that stretch reads SNIGSEHFIGLAGSGAASGFAVGAWEFNA. The chain crosses the membrane as a helical span at residues 87 to 110; sequence LLLLQLLGWVFIPIYIRSGVYTMP. Residues 111-123 lie on the Cytoplasmic side of the membrane; sequence EYLSKRFGGHRIQ. The helical transmembrane segment at 124 to 144 threads the bilayer; it reads VYFAALSLLLYIFTKLSVDLY. The Extracellular portion of the chain corresponds to 145 to 157; sequence SGALFIQESLGWN. Residues 158–183 traverse the membrane as a helical segment; sequence LYVSVILLIGMTALLTVTGGLVAVIY. Residues 184-186 lie on the Cytoplasmic side of the membrane; it reads TDT. The helical transmembrane segment at 187 to 205 threads the bilayer; sequence LQALLMIIGALTLMVISMV. Residues 206–303 lie on the Extracellular side of the membrane; that stretch reads KIGGFEEVKR…HAKGSTLMAG (98 aa). N232 carries N-linked (GlcNAc...) asparagine glycosylation. A helical transmembrane segment spans residues 304–324; that stretch reads FLKLLPMFIIVVPGMISRIVF. Over 325–353 the chain is Cytoplasmic; it reads ADEIACINPEHCMQVCGSRAGCSNIAYPR. A helical membrane pass occupies residues 354–376; sequence LVMTLVPVGLRGLMMAVMIAALM. At 377–406 the chain is on the extracellular side; it reads SDLDSIFNSASTIFTLDVYKLIRKSASSRE. The chain crosses the membrane as a helical span at residues 407-430; it reads LMIVGRIFVAFMVVISIAWVPIIV. Residues 431–443 are Cytoplasmic-facing; that stretch reads EMQGGQMYLYIQE. The helical transmembrane segment at 444–462 threads the bilayer; it reads VADYLTPPVAALFLLAIFW. The Extracellular segment spans residues 463-510; sequence KRCNEQGAFYGGMAGFVLGAVRLILAFTYRAPECDQPDNRPGFIKDIH. A helical membrane pass occupies residues 511–532; that stretch reads YMYVATALFWITGLITVIVSLL. Residues 533-695 are Cytoplasmic-facing; sequence TPPPTKDQIR…QMLEETPQVK (163 aa). A phosphoserine mark is found at S594 and S632. The helical transmembrane segment at 696–716 threads the bilayer; sequence VILNIGLFAVCSLGIFMFVYF. Residues 717–718 are Extracellular-facing; the sequence is SL.

This sequence belongs to the sodium:solute symporter (SSF) (TC 2.A.21) family. As to quaternary structure, interacts with KCNQ2 (via the pore module). Interacts with KCNQ1; this interaction is direct. Forms coregulatory complexes with ion channels KCNQ2-KCNQ3 and KCNQ1-KCNE2. As to expression, highly expressed in kidney, placenta, and brain and at a lesser extent in thymus, lung, bladder, and testes. Expressed in the choroid plexus epithelium (at protein level).

It is found in the apical cell membrane. The protein resides in the basolateral cell membrane. The catalysed reaction is myo-inositol(out) + 2 Na(+)(out) = myo-inositol(in) + 2 Na(+)(in). The enzyme catalyses scyllo-inositol(out) + 2 Na(+)(out) = scyllo-inositol(in) + 2 Na(+)(in). Electrogenic Na(+)-coupled sugar symporter that actively transports myo-inositol and its stereoisomer scyllo-inositol across the plasma membrane, with a Na(+) to sugar coupling ratio of 2:1. Maintains myo-inositol concentration gradient that defines cell volume and fluid balance during osmotic stress, in particular in the fetoplacental unit and central nervous system. Forms coregulatory complexes with voltage-gated K(+) ion channels, allosterically altering ion selectivity, voltage dependence and gating kinetics of the channel. In turn, K(+) efflux through the channel forms a local electrical gradient that modulates electrogenic Na(+)-coupled myo-inositol influx through the transporter. Associates with KCNQ1-KCNE2 channel in the apical membrane of choroid plexus epithelium and regulates the myo-inositol gradient between blood and cerebrospinal fluid with an impact on neuron excitability. Associates with KCNQ2-KCNQ3 channel altering ion selectivity, increasing Na(+) and Cs(+) permeation relative to K(+) permeation. Provides myo-inositol precursor for biosynthesis of phosphoinositides such as PI(4,5)P2, thus indirectly affecting the activity of phosphoinositide-dependent ion channels and Ca(2+) signaling upon osmotic stress. Functionally, (Microbial infection) Functions as a retroviral receptor for M813 murine leukemia virus (MuLV) entry. In Mus musculus (Mouse), this protein is Sodium/myo-inositol cotransporter (Slc5a3).